The following is a 259-amino-acid chain: UPF0246 protein Rfer_2372 (259 aa).

The protein belongs to the UPF0246 family.

In Albidiferax ferrireducens (strain ATCC BAA-621 / DSM 15236 / T118) (Rhodoferax ferrireducens), this protein is UPF0246 protein Rfer_2372.